The chain runs to 735 residues: Tripartite terminase subunit 3 (735 aa).

Residues 183–189 carry the Nuclear localization signal motif; sequence PKKRAKV. Residues 258-265 carry the Walker A motif motif; sequence VPRRHGKT. The Walker B motif motif lies at 352–357; it reads LLFVDE. E357 acts as the For ATPase activity in catalysis. Active-site for nuclease activity residues include D509, E581, and D707.

Belongs to the herpesviridae TRM3 protein family. As to quaternary structure, interacts with the terminase subunits TRM1 and TRM2. Interacts with portal protein.

Its subcellular location is the host nucleus. Component of the molecular motor that translocates viral genomic DNA in empty capsid during DNA packaging. Forms a tripartite terminase complex together with TRM1 and TRM2 in the host cytoplasm. Once the complex reaches the host nucleus, it interacts with the capsid portal vertex. This portal forms a ring in which genomic DNA is translocated into the capsid. TRM3 carries an RNase H-like nuclease activity that plays an important role for the cleavage of concatemeric viral DNA into unit length genomes. In Homo sapiens (Human), this protein is Tripartite terminase subunit 3.